Consider the following 99-residue polypeptide: MICOS complex subunit MIC10 (99 aa).

Transmembrane regions (helical) follow at residues 27-43 (RFVYSSLGGAFAGLLFF) and 50-66 (WASIAFGAGIGIGSAYT).

Belongs to the MICOS complex subunit Mic10 family. In terms of assembly, component of the mitochondrial contact site and cristae organizing system (MICOS) complex. The MICOS complex associates with mitochondrial outer membrane proteins. Present in a large lipid-enriched complex called mitochondrial transmembrane lipoprotein (MTL) complex made of proteins located in the two mitochondrial membranes, including the TOM complex and the core components of the MICOS complex and containing at least digalactosyldiacylglycerol (DGDG).

The protein resides in the mitochondrion inner membrane. Functionally, component of the MICOS complex, a large protein complex of the mitochondrial inner membrane that plays crucial roles in the maintenance of crista junctions, inner membrane architecture, and formation of contact sites to the outer membrane. The protein is MICOS complex subunit MIC10 of Arabidopsis thaliana (Mouse-ear cress).